The sequence spans 759 residues: uncharacterized protein (759 aa).

Disordered regions lie at residues 269 to 328 (SQRV…GEEP) and 406 to 759 (LPLR…AQTA). Basic and acidic residues predominate over residues 289-299 (AGGKEEAERGG). Low complexity predominate over residues 406-415 (LPLRPPSGSG). Residues 417–430 (AARKPGYEKEEGRG) are compositionally biased toward basic and acidic residues. The segment covering 431–444 (RATTASATAATSPR) has biased composition (low complexity). 2 stretches are compositionally biased toward basic and acidic residues: residues 469 to 518 (PESE…RGEH) and 525 to 545 (DSGR…EKGT). The span at 585-599 (WVPPPHLLFPSPLPS) shows a compositional bias: pro residues. Low complexity predominate over residues 659 to 680 (SLSSLSSSSSSSSSSSPSYSPS). The span at 681-690 (PLSPPSPVSP) shows a compositional bias: pro residues. Low complexity-rich tracts occupy residues 691 to 704 (SSPR…IRSP) and 728 to 746 (PPFS…PSAP).

This is an uncharacterized protein from Human herpesvirus 6B (strain Z29) (HHV-6 variant B).